Consider the following 61-residue polypeptide: Large ribosomal subunit protein uL30 (61 aa).

This sequence belongs to the universal ribosomal protein uL30 family. As to quaternary structure, part of the 50S ribosomal subunit.

This chain is Large ribosomal subunit protein uL30, found in Chlorobaculum parvum (strain DSM 263 / NCIMB 8327) (Chlorobium vibrioforme subsp. thiosulfatophilum).